The chain runs to 78 residues: Large ribosomal subunit protein bL28 (78 aa).

The protein belongs to the bacterial ribosomal protein bL28 family.

The protein is Large ribosomal subunit protein bL28 of Bordetella avium (strain 197N).